We begin with the raw amino-acid sequence, 445 residues long: Probable D-serine dehydratase (445 aa).

Lys-119 bears the N6-(pyridoxal phosphate)lysine mark.

It belongs to the serine/threonine dehydratase family. DsdA subfamily. The cofactor is pyridoxal 5'-phosphate.

The enzyme catalyses D-serine = pyruvate + NH4(+). The sequence is that of Probable D-serine dehydratase from Pseudomonas putida (strain GB-1).